The primary structure comprises 194 residues: Der GTPase-activating protein YihI (194 aa).

A disordered region spans residues 1-87 (MSRQKKSRNI…RDPRLGSRKK (87 aa)). The span at 37–48 (TRYELDAKARED) shows a compositional bias: basic and acidic residues.

Belongs to the YihI family. In terms of assembly, interacts with Der.

Its function is as follows. A GTPase-activating protein (GAP) that modifies Der/EngA GTPase function. May play a role in ribosome biogenesis. The polypeptide is Der GTPase-activating protein YihI (Mannheimia succiniciproducens (strain KCTC 0769BP / MBEL55E)).